Consider the following 251-residue polypeptide: Glucosamine-6-phosphate deaminase (251 aa).

D67 functions as the Proton acceptor; for enolization step in the catalytic mechanism. The active-site For ring-opening step is the N136. H138 functions as the Proton acceptor; for ring-opening step in the catalytic mechanism. Catalysis depends on E143, which acts as the For ring-opening step.

This sequence belongs to the glucosamine/galactosamine-6-phosphate isomerase family. NagB subfamily.

The enzyme catalyses alpha-D-glucosamine 6-phosphate + H2O = beta-D-fructose 6-phosphate + NH4(+). The protein operates within amino-sugar metabolism; N-acetylneuraminate degradation; D-fructose 6-phosphate from N-acetylneuraminate: step 5/5. In terms of biological role, catalyzes the reversible isomerization-deamination of glucosamine 6-phosphate (GlcN6P) to form fructose 6-phosphate (Fru6P) and ammonium ion. The chain is Glucosamine-6-phosphate deaminase from Geobacillus sp. (strain WCH70).